The chain runs to 517 residues: Quinol oxidase subunit 1 (517 aa).

The next 12 helical transmembrane spans lie at 19 to 39 (VVWLYTIGSIFWLGVLGIAAM), 64 to 84 (IHGWAAMIAFVPMAAAAVIGF), 98 to 118 (QMAIFFWLSNVLLGIAMAGSP), 150 to 170 (MAYLVMSIAVILQTAAFVTLI), 185 to 205 (IFAAYGVAFSIVIAVTLPALA), 226 to 246 (WAILFWFYGHPVVYYVPFPLF), 271 to 291 (IYLLAIGTMGVWVHHLQTWPL), 303 to 323 (TLILATGSGLTVLNLGLTIFT), 333 to 353 (VGMGALISLIGFILAGAQALV), 369 to 389 (VVGHFHLMIWTLIIMGYTTVF), 412 to 432 (IGMIWWTAPFMGVGYAMSVAG), and 460 to 480 (IGIPGLLLTLFVGMFDALAYA). Histidine 65 provides a ligand contact to Fe(II)-heme a. Histidine 235, tyrosine 239, histidine 284, and histidine 285 together coordinate Cu cation. The segment at residues 235 to 239 (HPVVY) is a cross-link (1'-histidyl-3'-tyrosine (His-Tyr)). Position 372 (histidine 372) interacts with heme a3. Residue histidine 374 coordinates Fe(II)-heme a.

This sequence belongs to the heme-copper respiratory oxidase family.

It is found in the cell membrane. The catalysed reaction is 2 a quinol + O2 = 2 a quinone + 2 H2O. Catalyzes the reduction of oxygen to water. Its function is as follows. Subunits I, II and III form the functional core of the enzyme complex. Electrons originating in caldariella quinol are transferred to the binuclear center formed by heme A3 and Cu(B). Functionally, subunit I binds heme a and the bimetallic center. The chain is Quinol oxidase subunit 1 (soxB) from Sulfolobus acidocaldarius (strain ATCC 33909 / DSM 639 / JCM 8929 / NBRC 15157 / NCIMB 11770).